The chain runs to 115 residues: Large ribosomal subunit protein bL19 (115 aa).

This sequence belongs to the bacterial ribosomal protein bL19 family.

Its function is as follows. This protein is located at the 30S-50S ribosomal subunit interface and may play a role in the structure and function of the aminoacyl-tRNA binding site. This chain is Large ribosomal subunit protein bL19, found in Buchnera aphidicola subsp. Acyrthosiphon pisum (strain Tuc7).